The chain runs to 230 residues: Large ribosomal subunit protein uL1 (230 aa).

It belongs to the universal ribosomal protein uL1 family. As to quaternary structure, part of the 50S ribosomal subunit.

Binds directly to 23S rRNA. The L1 stalk is quite mobile in the ribosome, and is involved in E site tRNA release. In terms of biological role, protein L1 is also a translational repressor protein, it controls the translation of the L11 operon by binding to its mRNA. The polypeptide is Large ribosomal subunit protein uL1 (Rhodopseudomonas palustris (strain BisB18)).